Here is a 428-residue protein sequence, read N- to C-terminus: Immunoglobulin superfamily containing leucine-rich repeat protein (428 aa).

An N-terminal signal peptide occupies residues 1–18; it reads MQELRLLCLVVLVGLAQA. The region spanning 19–50 is the LRRNT domain; that stretch reads CPEPCECGEKYGFHIADCAYRDLQAVPSGFPA. An N-linked (GlcNAc...) asparagine glycan is attached at Asn-51. LRR repeat units lie at residues 51-72, 75-96, 99-122, 123-144, and 147-168; these read NVTT…AFRE, RLQS…ALAS, QLKS…HSLS, ALQL…AFRS, and ALRS…TFAP. An LRRCT domain is found at 180–231; that stretch reads NPFDCTCGIVWFKTWALTTAVSIPEQDNITCTSPHVLKGTRLNRLLPLPCSA. The Ig-like domain occupies 232-343; the sequence is PSVQLTYQPS…GSAESSVNVA (112 aa). Residues Cys-257 and Cys-327 are joined by a disulfide bond. Asn-309 carries an N-linked (GlcNAc...) asparagine glycan.

The protein resides in the secreted. This Bos taurus (Bovine) protein is Immunoglobulin superfamily containing leucine-rich repeat protein (ISLR).